A 366-amino-acid polypeptide reads, in one-letter code: MCMQEYSTCPTIDHDGLHKICCYSHSQHDCRDPVIDMPPCCYPTLVRKQKMTVNPGSKSHHPKAGLLSYLPAALVPYGELLRVHRALGYYLNTSPYVVGIAYSAATAPTKLPLDLLLDRLLLLTLWSFILRSAGCAWNDLIDVDIDRQISRTQSRPLARGAISLPTATIFTACLFALGCSLFLFLPRQCAFEAGIEVFFALLYPFGKRFTDHPQLILVNIAWAIPMAMHSLGVEPGRQILSSICLCVFIATVIVLIDLVYSRQDTEEDLKVGVKSMAVRYRDCIDTLAYSLFAISTLALLFGGLLGGLRAPFVVFSVGGHIVGFWTFLRASLQTGPAGVESRAKSSCLMASIFWLLGLGIEYAVRV.

A run of 8 helical transmembrane segments spans residues 97 to 117, 121 to 141, 164 to 184, 215 to 235, 239 to 259, 287 to 307, 308 to 328, and 346 to 366; these read VVGI…DLLL, LLLT…NDLI, LPTA…LFLF, LILV…GVEP, ILSS…IDLV, LAYS…LLGG, LRAP…WTFL, and SCLM…AVRV.

The protein belongs to the UbiA prenyltransferase family. Requires Mg(2+) as cofactor.

Its subcellular location is the membrane. It carries out the reaction 3,5-dimethylorsellinate + (2E,6E)-farnesyl diphosphate = (3R)-3-farnesyl-6-hydroxy-2,3,5-trimethyl-4-oxocyclohexa-1,5-diene-1-carboxylate + diphosphate + H(+). It functions in the pathway secondary metabolite biosynthesis; terpenoid biosynthesis. Polyprenyl transferase; part of the gene cluster that mediates the biosynthesis of calidodehydroaustin, a fungal meroterpenoid. The first step of the pathway is the synthesis of 3,5-dimethylorsellinic acid by the polyketide synthase ausA. 3,5-dimethylorsellinic acid is then prenylated by the polyprenyl transferase ausN. Further epoxidation by the FAD-dependent monooxygenase ausM and cyclization by the probable terpene cyclase ausL lead to the formation of protoaustinoid A. Protoaustinoid A is then oxidized to spiro-lactone preaustinoid A3 by the combined action of the FAD-binding monooxygenases ausB and ausC, and the dioxygenase ausE. Acid-catalyzed keto-rearrangement and ring contraction of the tetraketide portion of preaustinoid A3 by ausJ lead to the formation of preaustinoid A4. The aldo-keto reductase ausK, with the help of ausH, is involved in the next step by transforming preaustinoid A4 into isoaustinone which is in turn hydroxylated by the P450 monooxygenase ausI to form austinolide. The cytochrome P450 monooxygenase ausG modifies austinolide to austinol. Austinol is further acetylated to austin by the O-acetyltransferase ausP, which spontaneously changes to dehydroaustin. The cytochrome P450 monooxygenase ausR then converts dehydroaustin is into 7-dehydrodehydroaustin. The hydroxylation catalyzed by ausR permits the O-acetyltransferase ausQ to add an additional acetyl group to the molecule, leading to the formation of acetoxydehydroaustin. The short chain dehydrogenase ausT catalyzes the reduction of the double bond present between carbon atoms 1 and 2 to convert 7-dehydrodehydroaustin into 1,2-dihydro-7-hydroxydehydroaustin. AusQ catalyzes not only an acetylation reaction but also the addition of the PKS ausV diketide product to 1,2-dihydro-7-hydroxydehydroaustin, forming precalidodehydroaustin. Finally, the iron/alpha-ketoglutarate-dependent dioxygenase converts precalidodehydroaustin into calidodehydroaustin. The protein is Polyprenyl transferase ausN of Aspergillus calidoustus.